The following is a 122-amino-acid chain: Basic phospholipase A2 homolog Gln49-PLA2 (122 aa).

7 disulfide bridges follow: Cys26-Cys115, Cys28-Cys44, Cys43-Cys95, Cys49-Cys122, Cys50-Cys88, Cys57-Cys81, and Cys75-Cys86.

Belongs to the phospholipase A2 family. Group II subfamily. Q49 sub-subfamily. In terms of assembly, monomer. As to expression, expressed by the venom gland.

The protein localises to the secreted. Its function is as follows. Snake venom phospholipase A2 (PLA2) homolog that shows local myotoxicity, apparent anticoagulant activity, and neurotoxicity. Shows analgesic effect on mice due to a decrease of action potentials and nerve conduction velocity. These effects are caused by inhibition of voltage-gated ion channels (potassium (Kv) and sodium (Nav)). In addition, analgesic effects are antagonized by naloxone, implying the mechanism of action is correlated with opioid receptors (probably indirectly). Does not show detectable PLA2 activity on egg yolk phospholipids. This chain is Basic phospholipase A2 homolog Gln49-PLA2, found in Gloydius ussuriensis (Ussuri mamushi).